A 654-amino-acid chain; its full sequence is Collagen alpha-1(XXV) chain (654 aa).

Residues 1–26 are disordered; the sequence is MLLKKHAGKGGGREPRSEDPTPAEQH. Over 1–33 the chain is Cytoplasmic; sequence MLLKKHAGKGGGREPRSEDPTPAEQHCARTMPP. A helical; Signal-anchor for type II membrane protein membrane pass occupies residues 34 to 54; that stretch reads CAVLAALLSVVAVVSCLYLGV. Residues 55-654 are Extracellular-facing; the sequence is KTNDLQARIA…GLPMPGCWQK (600 aa). The residue at position 113 (Glu-113) is a Pyrrolidone carboxylic acid (Glu). Residues 116–168 are disordered; the sequence is SECNCPAGPPGKRGKRGRRGESGPPGQPGPQGPPGPKGDKGEQGDQGPRMVFP. The region spanning 121-164 is the Collagen-like 1 domain; the sequence is PAGPPGKRGKRGRRGESGPPGQPGPQGPPGPKGDKGEQGDQGPR. A compositionally biased stretch (pro residues) spans 140–151; it reads PGQPGPQGPPGP. Residues 181–188 are interaction with amyloid-beta peptide; that stretch reads LIKRRLIK. Disordered regions lie at residues 189 to 426 and 445 to 654; these read GDQG…QGAT and LTVT…CWQK. Collagen-like domains follow at residues 192-247, 249-308, 311-370, 372-425, and 447-505; these read GQAG…QKGS, GAPG…PGSS, GIKG…AGPP, RGER…DQGA, and VTGP…PGLP. Positions 196 to 208 are enriched in pro residues; that stretch reads PPGPPGPPGPRGP. A compositionally biased stretch (low complexity) spans 230 to 245; the sequence is PGEQGLMGPLGPPGQK. The segment covering 280–290 has biased composition (basic and acidic residues); it reads EPGEQGEKGDA. The span at 336–358 shows a compositional bias: low complexity; the sequence is LPGIKGEPGFIGPQGEPGLPGLP. Basic and acidic residues-rich tracts occupy residues 361 to 377 and 398 to 407; these read KGER…ERGE and SKGDRGEKGD. A compositionally biased stretch (low complexity) spans 457-466; that stretch reads QGLQGPKGEQ. The span at 494 to 503 shows a compositional bias: gly residues; it reads GEKGGIGLPG. Low complexity predominate over residues 517–527; sequence SGMPGPQGPSI. The span at 528 to 543 shows a compositional bias: pro residues; it reads IGPPGPPGPHGPPGPM. A Collagen-like 7 domain is found at 571 to 630; it reads GEKGAMGEPGPRGPYGLPGKDGEPGLDGFPGPRGEKGDLGEKGEKGFRGVKGEKGEPGQP. Residues 603 to 626 show a composition bias toward basic and acidic residues; it reads RGEKGDLGEKGEKGFRGVKGEKGE.

As to quaternary structure, forms homodimers and homotrimers. Binds to the fibrillized forms of amyloid-beta protein 40 (beta-APP40) and amyloid-beta protein 42 (beta-APP42). Found associated with beta-APP42 more frequently than with beta-APP40. Undergoes proteolytic cleavage by furin protease to yield the soluble collagen-like Alzheimer amyloid plaque component. In terms of processing, glycosylated. Post-translationally, hydroxylated on 11% of proline residues and 49% of lysine residues. As to expression, expressed predominantly in brain. Deposited preferentially in primitive or neuritic amyloid plaques which are typical of Alzheimer disease.

The protein resides in the membrane. Inhibits fibrillization of amyloid-beta peptide during the elongation phase. Has also been shown to assemble amyloid fibrils into protease-resistant aggregates. Binds heparin. The protein is Collagen alpha-1(XXV) chain of Homo sapiens (Human).